The primary structure comprises 303 residues: Protoheme IX farnesyltransferase (303 aa).

Helical transmembrane passes span 25-45 (MGLV…AVVM), 54-74 (IPQI…ACAL), 104-124 (LLLL…LLNI), 125-145 (PSGV…SIWS), 151-171 (WNTV…WVAI), 179-199 (AIAL…ALAI), 227-247 (FIWL…GVVF), 248-268 (VVLA…TFKK), and 280-300 (FIYS…VSLL).

The protein belongs to the UbiA prenyltransferase family. Protoheme IX farnesyltransferase subfamily. Interacts with CtaA.

The protein localises to the cell membrane. The enzyme catalyses heme b + (2E,6E)-farnesyl diphosphate + H2O = Fe(II)-heme o + diphosphate. It functions in the pathway porphyrin-containing compound metabolism; heme O biosynthesis; heme O from protoheme: step 1/1. In terms of biological role, converts heme B (protoheme IX) to heme O by substitution of the vinyl group on carbon 2 of heme B porphyrin ring with a hydroxyethyl farnesyl side group. This chain is Protoheme IX farnesyltransferase, found in Staphylococcus aureus (strain Mu3 / ATCC 700698).